The sequence spans 231 residues: Large ribosomal subunit protein uL1 (231 aa).

Belongs to the universal ribosomal protein uL1 family. In terms of assembly, part of the 50S ribosomal subunit.

In terms of biological role, binds directly to 23S rRNA. The L1 stalk is quite mobile in the ribosome, and is involved in E site tRNA release. Functionally, protein L1 is also a translational repressor protein, it controls the translation of the L11 operon by binding to its mRNA. This chain is Large ribosomal subunit protein uL1, found in Macrococcus caseolyticus (strain JCSC5402) (Macrococcoides caseolyticum).